The primary structure comprises 371 residues: tRNA-specific 2-thiouridylase MnmA (371 aa).

ATP is bound by residues 13 to 20 (GMSGGVDS) and Met-39. The tract at residues 99-101 (NPD) is interaction with target base in tRNA. Residue Cys-104 is the Nucleophile of the active site. Cys-104 and Cys-200 form a disulfide bridge. Gly-128 contributes to the ATP binding site. Residues 150–152 (KDQ) are interaction with tRNA. Catalysis depends on Cys-200, which acts as the Cysteine persulfide intermediate. The interaction with tRNA stretch occupies residues 308-309 (RY).

This sequence belongs to the MnmA/TRMU family.

It localises to the cytoplasm. The enzyme catalyses S-sulfanyl-L-cysteinyl-[protein] + uridine(34) in tRNA + AH2 + ATP = 2-thiouridine(34) in tRNA + L-cysteinyl-[protein] + A + AMP + diphosphate + H(+). Functionally, catalyzes the 2-thiolation of uridine at the wobble position (U34) of tRNA, leading to the formation of s(2)U34. The sequence is that of tRNA-specific 2-thiouridylase MnmA from Geobacillus thermodenitrificans (strain NG80-2).